Here is a 1006-residue protein sequence, read N- to C-terminus: UPF0182 protein Arth_2749 (1006 aa).

Helical transmembrane passes span 18 to 38 (GALT…IFFA), 64 to 84 (IIIF…AIRI), 115 to 135 (VVMI…AASQ), 168 to 188 (FLGF…IAGI), 211 to 231 (QIHL…NFWL), 260 to 280 (SILA…AVIG), and 287 to 307 (IGTA…PWVI). Disordered regions lie at residues 490–519 (GAPE…FTGN), 896–923 (KAGD…GGTD), and 975–1006 (LGSE…SPSN). Positions 495–509 (SPHREQDRPAGKEGD) are enriched in basic and acidic residues. 2 stretches are compositionally biased toward low complexity: residues 911 to 923 (AGGS…GGTD) and 979 to 1000 (GASP…AATP).

Belongs to the UPF0182 family.

Its subcellular location is the cell membrane. This chain is UPF0182 protein Arth_2749, found in Arthrobacter sp. (strain FB24).